A 645-amino-acid chain; its full sequence is 1-phosphatidylinositol 4,5-bisphosphate phosphodiesterase zeta-1 (645 aa).

The EF-hand domain maps to 42-77; the sequence is CHFAHVKRIFKENDRHNQGRITTEDFRTIYRCIVHR. The PI-PLC X-box domain maps to 162 to 306; the sequence is QDMNKPLNDY…LKFKILVKNK (145 aa). Residues His177 and His222 contribute to the active site. Positions 385–501 constitute a PI-PLC Y-box domain; sequence LSDLVIYTKA…GYVLKPDFLR (117 aa). In terms of domain architecture, C2 spans 501–625; sequence RDTTLGFNPN…KGYRRVPLFS (125 aa).

As to quaternary structure, interacts via its C2 domain with PtdIns(3)P and, to a lesser extent, PtdIns(5)P in vitro. Ca(2+) is required as a cofactor.

It is found in the nucleus. The protein localises to the cytoplasm. Its subcellular location is the perinuclear region. It carries out the reaction a 1,2-diacyl-sn-glycero-3-phospho-(1D-myo-inositol-4,5-bisphosphate) + H2O = 1D-myo-inositol 1,4,5-trisphosphate + a 1,2-diacyl-sn-glycerol + H(+). Its function is as follows. The production of the second messenger molecules diacylglycerol (DAG) and inositol 1,4,5-trisphosphate (IP3) is mediated by activated phosphatidylinositol-specific phospholipase C enzymes. In vitro, hydrolyzes PtdIns(4,5)P2 in a Ca(2+)-dependent manner. Triggers intracellular Ca(2+) oscillations in oocytes solely during M phase and is involved in inducing oocyte activation and initiating embryonic development up to the blastocyst stage. Is therefore a strong candidate for the egg-activating soluble sperm factor that is transferred from the sperm into the egg cytoplasm following gamete membrane fusion. May exert an inhibitory effect on phospholipase-C-coupled processes that depend on calcium ions and protein kinase C, including CFTR trafficking and function. The protein is 1-phosphatidylinositol 4,5-bisphosphate phosphodiesterase zeta-1 of Rattus norvegicus (Rat).